Reading from the N-terminus, the 52-residue chain is Large ribosomal subunit protein bL33 (52 aa).

It belongs to the bacterial ribosomal protein bL33 family.

In Helicobacter acinonychis (strain Sheeba), this protein is Large ribosomal subunit protein bL33.